Here is a 473-residue protein sequence, read N- to C-terminus: Siroheme synthase (473 aa).

The tract at residues 1–203 (MNYLPIFIDL…GNKEQAINVL (203 aa)) is precorrin-2 dehydrogenase /sirohydrochlorin ferrochelatase. NAD(+) is bound by residues 22–23 (EV) and 43–44 (KE). Ser-128 is modified (phosphoserine). The segment at 215 to 473 (GEIILVGAGP…KNKFSTLTFI (259 aa)) is uroporphyrinogen-III C-methyltransferase. An S-adenosyl-L-methionine-binding site is contributed by Pro-224. Asp-247 (proton acceptor) is an active-site residue. Residue Lys-269 is the Proton donor of the active site. S-adenosyl-L-methionine is bound by residues 300-302 (GGD), Ile-305, Met-382, and Gly-411.

This sequence in the N-terminal section; belongs to the precorrin-2 dehydrogenase / sirohydrochlorin ferrochelatase family. In the C-terminal section; belongs to the precorrin methyltransferase family.

It carries out the reaction uroporphyrinogen III + 2 S-adenosyl-L-methionine = precorrin-2 + 2 S-adenosyl-L-homocysteine + H(+). The catalysed reaction is precorrin-2 + NAD(+) = sirohydrochlorin + NADH + 2 H(+). It catalyses the reaction siroheme + 2 H(+) = sirohydrochlorin + Fe(2+). The protein operates within cofactor biosynthesis; adenosylcobalamin biosynthesis; precorrin-2 from uroporphyrinogen III: step 1/1. It functions in the pathway cofactor biosynthesis; adenosylcobalamin biosynthesis; sirohydrochlorin from precorrin-2: step 1/1. Its pathway is porphyrin-containing compound metabolism; siroheme biosynthesis; precorrin-2 from uroporphyrinogen III: step 1/1. It participates in porphyrin-containing compound metabolism; siroheme biosynthesis; siroheme from sirohydrochlorin: step 1/1. The protein operates within porphyrin-containing compound metabolism; siroheme biosynthesis; sirohydrochlorin from precorrin-2: step 1/1. Functionally, multifunctional enzyme that catalyzes the SAM-dependent methylations of uroporphyrinogen III at position C-2 and C-7 to form precorrin-2 via precorrin-1. Then it catalyzes the NAD-dependent ring dehydrogenation of precorrin-2 to yield sirohydrochlorin. Finally, it catalyzes the ferrochelation of sirohydrochlorin to yield siroheme. The protein is Siroheme synthase of Buchnera aphidicola subsp. Acyrthosiphon pisum (strain APS) (Acyrthosiphon pisum symbiotic bacterium).